The sequence spans 248 residues: MYQNSLIDFNPYNSLSAVEVGKHLYWKIGSLQLHGQVFIVSWLVIATLLTLSFLGTRNLQRIPEKFQNFMEFILEFLQDIAKNQIGEHEYRPWVPYIATLFLFILGCNWAGALIPWKLIHLPEGELAAPTNDINTTVALSLLTSLAYFYAGLSKKGLGYFARYIQPTPVLLPINILEDFTKPLSLSFRLFGNVLADELVVSVFTLLIPILIPLPVMILGLFASSIQALIFSTLSAAYIGEAMEGHGEE.

Helical transmembrane passes span 35 to 55 (GQVF…SFLG), 94 to 114 (VPYI…GALI), 133 to 153 (INTT…AGLS), 202 to 222 (VFTL…GLFA), and 224 to 244 (SIQA…AMEG).

The protein belongs to the ATPase A chain family. In terms of assembly, F-type ATPases have 2 components, CF(1) - the catalytic core - and CF(0) - the membrane proton channel. CF(1) has five subunits: alpha(3), beta(3), gamma(1), delta(1), epsilon(1). CF(0) has four main subunits: a, b, b' and c.

The protein localises to the plastid. It localises to the chloroplast thylakoid membrane. Functionally, key component of the proton channel; it plays a direct role in the translocation of protons across the membrane. This Pyropia yezoensis (Susabi-nori) protein is ATP synthase subunit a, chloroplastic.